Consider the following 97-residue polypeptide: Large ribosomal subunit protein uL23 (97 aa).

The protein belongs to the universal ribosomal protein uL23 family. Part of the 50S ribosomal subunit. Contacts protein L29, and trigger factor when it is bound to the ribosome.

One of the early assembly proteins it binds 23S rRNA. One of the proteins that surrounds the polypeptide exit tunnel on the outside of the ribosome. Forms the main docking site for trigger factor binding to the ribosome. This Clostridium botulinum (strain ATCC 19397 / Type A) protein is Large ribosomal subunit protein uL23.